Reading from the N-terminus, the 271-residue chain is Murein DD-endopeptidase MepH (271 aa).

The signal sequence occupies residues 1–27 (MARINRISITLCALLFTTLPLTPMAHA). The segment at 27–102 (ASKQARESSA…KHAVNKTASA (76 aa)) is disordered. Basic residues predominate over residues 55 to 64 (KTQKTAKKAA). Low complexity predominate over residues 65–86 (SKSTTKSKTASSVKKSSITASK). A NlpC/P60 domain is found at 138–265 (QKATKVAMNK…RHYVGARRVM (128 aa)). Residue Cys-169 is the Nucleophile of the active site. His-224 serves as the catalytic Proton acceptor. Gln-236 is an active-site residue.

Belongs to the peptidase C40 family.

It participates in cell wall biogenesis; cell wall polysaccharide biosynthesis. In terms of biological role, a murein DD-endopeptidase with specificity for D-Ala-meso-diaminopimelic acid (mDAP) cross-links. Its role is probably to cleave D-Ala-mDAP cross-links to allow insertion of new glycans and thus cell wall expansion. Functionally redundant with MepM and MepH. Partially suppresses an mepS disruption mutant. This is Murein DD-endopeptidase MepH (mepH) from Escherichia coli (strain K12).